We begin with the raw amino-acid sequence, 462 residues long: MAATVNLELDPIFLKALGFLHSKSKDSAEKLKALLDESLARGIDSSYRPSQKDVEPPKISSTKNISIKQEPKISSSLPSGNNNGKVLTTEKVKKEAEKRPADKMKSDITEGVDIPKKPRLEKPETQSSPITVQTSKDLAMADLSSFEETSADDFAMEMGLACVVCRQMMVASGNQLVECQECHNLYHRDCHKPQVTDKEANDPRLVWYCARCTRQMKRMAQKTQKPPQKPAPAVVSVTPAVKDPLVKKPETKLKQETTFLAFKRTEVKTSTVISGNSSSASVSSSVTSGLTGWAAFAAKTSSAGPSTAKLSSTTQNSTGKPATSSANQKPVGLTGLATSSKGGIGSKIGSNNSTTPTVPLKPPPPLTLGKTGLSRSVSCDNVSKVGLPSPSSLVPGNSSQLSGNGNTGTSGPSGSTTSKTTSESSSSPSASLKGPTSQESQLNAMKRLQMVKKKAAQKKLKK.

A disordered region spans residues 42–129; the sequence is GIDSSYRPSQ…LEKPETQSSP (88 aa). Over residues 59–86 the composition is skewed to polar residues; sequence ISSTKNISIKQEPKISSSLPSGNNNGKV. A Glycyl lysine isopeptide (Lys-Gly) (interchain with G-Cter in SUMO2) cross-link involves residue Lys-68. The span at 88-124 shows a compositional bias: basic and acidic residues; sequence TTEKVKKEAEKRPADKMKSDITEGVDIPKKPRLEKPE. Ser-128 carries the post-translational modification Phosphoserine. A PHD-type zinc finger spans residues 159–215; that stretch reads GLACVVCRQMMVASGNQLVECQECHNLYHRDCHKPQVTDKEANDPRLVWYCARCTRQ. Lys-254 participates in a covalent cross-link: Glycyl lysine isopeptide (Lys-Gly) (interchain with G-Cter in SUMO2). A compositionally biased stretch (polar residues) spans 301–328; that stretch reads SSAGPSTAKLSSTTQNSTGKPATSSANQ. The interval 301–462 is disordered; sequence SSAGPSTAKL…KKAAQKKLKK (162 aa). 2 stretches are compositionally biased toward low complexity: residues 347–358 and 396–437; these read KIGSNNSTTPTV and GNSS…GPTS. Residues 449–462 are compositionally biased toward basic residues; the sequence is QMVKKKAAQKKLKK.

Belongs to the Integrator subunit 12 family. As to quaternary structure, component of the Integrator complex, composed of core subunits INTS1, INTS2, INTS3, INTS4, INTS5, INTS6, INTS7, INTS8, INTS9/RC74, INTS10, INTS11/CPSF3L, INTS12, INTS13, INTS14 and INTS15. The core complex associates with protein phosphatase 2A subunits PPP2CA and PPP2R1A, to form the Integrator-PP2A (INTAC) complex. In terms of processing, dephosphorylated at Ser-128 by the PNUTS-PP1 complex, promoting RNA polymerase II transcription pause-release.

It is found in the nucleus. Component of the integrator complex, a multiprotein complex that terminates RNA polymerase II (Pol II) transcription in the promoter-proximal region of genes. The integrator complex provides a quality checkpoint during transcription elongation by driving premature transcription termination of transcripts that are unfavorably configured for transcriptional elongation: the complex terminates transcription by (1) catalyzing dephosphorylation of the C-terminal domain (CTD) of Pol II subunit POLR2A/RPB1 and SUPT5H/SPT5, (2) degrading the exiting nascent RNA transcript via endonuclease activity and (3) promoting the release of Pol II from bound DNA. The integrator complex is also involved in terminating the synthesis of non-coding Pol II transcripts, such as enhancer RNAs (eRNAs), small nuclear RNAs (snRNAs), telomerase RNAs and long non-coding RNAs (lncRNAs). Mediates recruitment of cytoplasmic dynein to the nuclear envelope, probably as component of the integrator complex. The chain is Integrator complex subunit 12 (INTS12) from Macaca fascicularis (Crab-eating macaque).